The sequence spans 503 residues: Maturase K (503 aa).

Belongs to the intron maturase 2 family. MatK subfamily.

The protein resides in the plastid. It localises to the chloroplast. Usually encoded in the trnK tRNA gene intron. Probably assists in splicing its own and other chloroplast group II introns. This chain is Maturase K, found in Backhousia myrtifolia (Grey myrtle).